We begin with the raw amino-acid sequence, 51 residues long: Large ribosomal subunit protein eL39y (51 aa).

Positions 1–21 are disordered; sequence MPSHKSFMIKKKLGKKMRQNR. A compositionally biased stretch (basic residues) spans 7–19; that stretch reads FMIKKKLGKKMRQ.

This sequence belongs to the eukaryotic ribosomal protein eL39 family.

The chain is Large ribosomal subunit protein eL39y (RPL39B) from Arabidopsis thaliana (Mouse-ear cress).